A 201-amino-acid polypeptide reads, in one-letter code: 3-isopropylmalate dehydratase small subunit (201 aa).

Belongs to the LeuD family. LeuD type 1 subfamily. Heterodimer of LeuC and LeuD.

The catalysed reaction is (2R,3S)-3-isopropylmalate = (2S)-2-isopropylmalate. It functions in the pathway amino-acid biosynthesis; L-leucine biosynthesis; L-leucine from 3-methyl-2-oxobutanoate: step 2/4. Its function is as follows. Catalyzes the isomerization between 2-isopropylmalate and 3-isopropylmalate, via the formation of 2-isopropylmaleate. In Methylorubrum extorquens (strain ATCC 14718 / DSM 1338 / JCM 2805 / NCIMB 9133 / AM1) (Methylobacterium extorquens), this protein is 3-isopropylmalate dehydratase small subunit.